Here is a 312-residue protein sequence, read N- to C-terminus: Protoheme IX farnesyltransferase (312 aa).

9 helical membrane-spanning segments follow: residues 29 to 49, 50 to 70, 90 to 110, 117 to 137, 150 to 170, 177 to 197, 223 to 243, 248 to 268, and 292 to 312; these read VMSL…GHMN, PVLA…SGAL, IPAG…LSAF, LMVN…YAVV, IVIG…AATG, VVLF…LSLF, ALFY…LGFA, GAIS…MWVA, and LFAV…FGGF.

It belongs to the UbiA prenyltransferase family. Protoheme IX farnesyltransferase subfamily.

It localises to the cell inner membrane. The catalysed reaction is heme b + (2E,6E)-farnesyl diphosphate + H2O = Fe(II)-heme o + diphosphate. It participates in porphyrin-containing compound metabolism; heme O biosynthesis; heme O from protoheme: step 1/1. Functionally, converts heme B (protoheme IX) to heme O by substitution of the vinyl group on carbon 2 of heme B porphyrin ring with a hydroxyethyl farnesyl side group. The sequence is that of Protoheme IX farnesyltransferase from Brucella anthropi (strain ATCC 49188 / DSM 6882 / CCUG 24695 / JCM 21032 / LMG 3331 / NBRC 15819 / NCTC 12168 / Alc 37) (Ochrobactrum anthropi).